The following is a 415-amino-acid chain: BTB/POZ and MATH domain-containing protein 6 (415 aa).

The disordered stretch occupies residues 1–33 (MSKLMTRTSGSSSPNTIPDQIESPTSSRSVTQT). Residues 35–169 (NGSHQFVIQG…DDCLKINCTV (135 aa)) form the MATH domain. A BTB domain is found at 205–271 (SDVTFDVAGE…MYKDSLPGDV (67 aa)). Positions 385–415 (SSSGGGKSQSVWAQLSNGGETSSRRVRQRTT) are disordered. Positions 392-405 (SQSVWAQLSNGGET) are enriched in polar residues.

It belongs to the Tdpoz family. Heterodimer with BPM1. Interacts with RAP2-4. Interacts with CUL3A. Binds to MYB56 at the promoter of FLOWERING LOCUS T (FT). As to expression, ubiquitous.

The protein resides in the nucleus. Its subcellular location is the cytoplasm. It functions in the pathway protein modification; protein ubiquitination. In terms of biological role, may act as a substrate-specific adapter of an E3 ubiquitin-protein ligase complex (CUL3-RBX1-BTB) which mediates the ubiquitination and subsequent proteasomal degradation of target proteins. The protein is BTB/POZ and MATH domain-containing protein 6 (BPM6) of Arabidopsis thaliana (Mouse-ear cress).